The following is a 276-amino-acid chain: Rhomboid protease GlpG (276 aa).

The next 6 membrane-spanning stretches (helical) occupy residues 94–114, 142–162, 169–189, 192–212, 229–249, and 250–270; these read GPVT…MQIL, ALMH…WYLG, LGSG…GYVQ, FSGP…GYVW, LIIF…GMSM, and ANGA…VDSL. The active-site Nucleophile is S201. Residue H254 is part of the active site.

Belongs to the peptidase S54 family.

It is found in the cell inner membrane. The catalysed reaction is Cleaves type-1 transmembrane domains using a catalytic dyad composed of serine and histidine that are contributed by different transmembrane domains.. Functionally, rhomboid-type serine protease that catalyzes intramembrane proteolysis. This chain is Rhomboid protease GlpG, found in Escherichia fergusonii (strain ATCC 35469 / DSM 13698 / CCUG 18766 / IAM 14443 / JCM 21226 / LMG 7866 / NBRC 102419 / NCTC 12128 / CDC 0568-73).